Consider the following 325-residue polypeptide: Heat-inducible transcription repressor HrcA (325 aa).

It belongs to the HrcA family.

Its function is as follows. Negative regulator of class I heat shock genes (grpE-dnaK-dnaJ and groELS operons). Prevents heat-shock induction of these operons. This chain is Heat-inducible transcription repressor HrcA, found in Staphylococcus aureus (strain USA300).